An 87-amino-acid polypeptide reads, in one-letter code: Small ribosomal subunit protein bS18 (87 aa).

The tract at residues 1-21 (MRHKPTPPKGNKSLGNALASK) is disordered.

It belongs to the bacterial ribosomal protein bS18 family. In terms of assembly, part of the 30S ribosomal subunit. Forms a tight heterodimer with protein bS6.

Functionally, binds as a heterodimer with protein bS6 to the central domain of the 16S rRNA, where it helps stabilize the platform of the 30S subunit. This is Small ribosomal subunit protein bS18 from Chlorobium phaeobacteroides (strain DSM 266 / SMG 266 / 2430).